The primary structure comprises 363 residues: Pyrimidine monooxygenase RutA (363 aa).

Residues 49–50 (IK), N115, E124, 140–141 (RY), and S190 each bind FMN.

It belongs to the NtaA/SnaA/DszA monooxygenase family. RutA subfamily.

It carries out the reaction uracil + FMNH2 + NADH + O2 = (Z)-3-ureidoacrylate + FMN + NAD(+) + H2O + H(+). The enzyme catalyses thymine + FMNH2 + NADH + O2 = (Z)-2-methylureidoacrylate + FMN + NAD(+) + H2O + H(+). In terms of biological role, catalyzes the pyrimidine ring opening between N-3 and C-4 by an unusual flavin hydroperoxide-catalyzed mechanism, adding oxygen atoms in the process to yield ureidoacrylate peracid, that immediately reacts with FMN forming ureidoacrylate and FMN-N(5)-oxide. The FMN-N(5)-oxide reacts spontaneously with NADH to produce FMN. Requires the flavin reductase RutF to regenerate FMN in vivo. In Escherichia coli O127:H6 (strain E2348/69 / EPEC), this protein is Pyrimidine monooxygenase RutA.